The chain runs to 209 residues: UPF0502 protein mll4256 (209 aa).

It belongs to the UPF0502 family.

The protein is UPF0502 protein mll4256 of Mesorhizobium japonicum (strain LMG 29417 / CECT 9101 / MAFF 303099) (Mesorhizobium loti (strain MAFF 303099)).